Reading from the N-terminus, the 245-residue chain is Transmembrane protein 69 (245 aa).

The next 5 membrane-spanning stretches (helical) occupy residues 97-117, 122-142, 159-179, 185-205, and 216-236; these read ALYITLAGLIPFTAPPLLMVI, IPVLAFTQMAYGAGFLAFLGG, YINLASSMSPILFSWAAILFS, AIVTLIIGLGIALHNELFLLP, and IVSTLVAFISFVVTLILENIY.

Its subcellular location is the membrane. The polypeptide is Transmembrane protein 69 (Tmem69) (Mus musculus (Mouse)).